A 706-amino-acid polypeptide reads, in one-letter code: Translation initiation factor IF-2 (706 aa).

The span at 55–81 shows a compositional bias: basic and acidic residues; it reads AKETANEKPAEQKKQSSNKINDRKKND. The segment at 55–127 is disordered; it reads AKETANEKPA…KPKKELPEKI (73 aa). Residues 82-98 show a composition bias toward low complexity; it reads VQNNQFNKNKKNNNQNK. The tr-type G domain maps to 207-376; it reads VRPPVVTIMG…LLVSEVGELK (170 aa). Residues 216 to 223 form a G1 region; that stretch reads GHVDHGKT. A GTP-binding site is contributed by 216 to 223; that stretch reads GHVDHGKT. A G2 region spans residues 241-245; sequence GITQH. The segment at 262 to 265 is G3; it reads DTPG. GTP contacts are provided by residues 262–266 and 316–319; these read DTPGH and NKID. The segment at 316–319 is G4; it reads NKID. The tract at residues 352-354 is G5; sequence SAK.

The protein belongs to the TRAFAC class translation factor GTPase superfamily. Classic translation factor GTPase family. IF-2 subfamily.

The protein resides in the cytoplasm. Functionally, one of the essential components for the initiation of protein synthesis. Protects formylmethionyl-tRNA from spontaneous hydrolysis and promotes its binding to the 30S ribosomal subunits. Also involved in the hydrolysis of GTP during the formation of the 70S ribosomal complex. In Bacillus pumilus (strain SAFR-032), this protein is Translation initiation factor IF-2.